The primary structure comprises 76 residues: RNA-binding protein KhpA (76 aa).

A KH domain is found at 29 to 76; it reads SLHIELSVHPDDMGKVIGKQGRTAKALRSVVYAAATKQKRRVRLDIID.

The protein belongs to the KhpA RNA-binding protein family. As to quaternary structure, forms a complex with KhpB.

The protein localises to the cytoplasm. A probable RNA chaperone. Forms a complex with KhpB which binds to cellular RNA and controls its expression. Plays a role in peptidoglycan (PG) homeostasis and cell length regulation. The polypeptide is RNA-binding protein KhpA (Halalkalibacterium halodurans (strain ATCC BAA-125 / DSM 18197 / FERM 7344 / JCM 9153 / C-125) (Bacillus halodurans)).